We begin with the raw amino-acid sequence, 434 residues long: Trigger factor (434 aa).

One can recognise a PPIase FKBP-type domain in the interval 162–247 (GDKINISLIA…FNTVEQAKLP (86 aa)).

Belongs to the FKBP-type PPIase family. Tig subfamily.

Its subcellular location is the cytoplasm. The catalysed reaction is [protein]-peptidylproline (omega=180) = [protein]-peptidylproline (omega=0). In terms of biological role, involved in protein export. Acts as a chaperone by maintaining the newly synthesized protein in an open conformation. Functions as a peptidyl-prolyl cis-trans isomerase. The sequence is that of Trigger factor from Methylobacillus flagellatus (strain ATCC 51484 / DSM 6875 / VKM B-1610 / KT).